A 748-amino-acid polypeptide reads, in one-letter code: MAESKCPAHQHVLKANVGGAGTSNQDWWPDRLKLNILRQNNPVSNPLGEEFDYAAAFNSLDYFALKKDIQDLMTDSQDWWPADFGHYGGLFIRMAWHSAGTYRVADGRGGGGGGQQRFAPLNSWPDNVGLDKARRLLWPIKQKYGNKISWADLLLLTGNVALESMGFKTFGFSGGRADTWEVDESANWGGETTWLGNDVRYSGGKADHKDIHNRDLDKPLAAAHMGLIYVNPEGPDGNPDPIAAAKDIRTTFGRMAMNDEETVALIAGGHTFGKTHGAGPADKLGPEPEAADMAQQGLGWTNSFKSGKGPDTTTSGLEVTWTKTPTKWSNQFLEYLFRYDWELTKSPAGAHQWVAKNAEAFIPDAFDPSKKRKPMMLTTDLSLRYDPIYEKISRRFLEHPDQFADAFARAWFKLLHRDLGPRALYIGPEVPAEVLPWQDPVPAVDHPLISNEDASALKQRILASGVKPSSLISTAWASASTFRGSDKRGGANGARIRLSPQREWAVNNQPWLRETLSVLEAIQKQFNTSQSGGKKVSIADLIVLAGVAAVEKAARDAGYAVTVPFTPGRTDASQEQTDVQSFSDMEPIADGFRNYGSSTSRVRAEEWLIDKAQLLTLSAPELAVLIGGLRVLNTNYDGSAHGVFTQRPGKLTNDFFVNLLDMNTAWKSIGGVDLYEGTDRKTGAKKWTATRNDLVFGSNAELRAIAEVYGSSDGQEKFVKDFVAAWDKVMNLDRFDLKKKQSTSSHRL.

A cross-link (tryptophyl-tyrosyl-methioninium (Trp-Tyr) (with M-255)) is located at residues tryptophan 96–tyrosine 229. Histidine 97 serves as the catalytic Proton acceptor. Positions tyrosine 229–methionine 255 form a cross-link, tryptophyl-tyrosyl-methioninium (Tyr-Met) (with W-96). Residue histidine 270 participates in heme b binding.

The protein belongs to the peroxidase family. Peroxidase/catalase subfamily. Homodimer or homotetramer. Heme b is required as a cofactor. Post-translationally, formation of the three residue Trp-Tyr-Met cross-link is important for the catalase, but not the peroxidase activity of the enzyme.

The protein resides in the cytoplasm. The catalysed reaction is H2O2 + AH2 = A + 2 H2O. It carries out the reaction 2 H2O2 = O2 + 2 H2O. In terms of biological role, bifunctional enzyme with both catalase and broad-spectrum peroxidase activity. Plays a crucial role in oxidative stress response during infection. Acts as an antigen and elicits antibody response in P.marneffei-infected AIDS patients, healthy people working in mycological laboratory, and healthy people in an endemic area. This is Catalase-peroxidase from Talaromyces marneffei (Penicillium marneffei).